The chain runs to 220 residues: Ribosomal RNA small subunit methyltransferase J (220 aa).

Residues 55 to 56, 71 to 72, and aspartate 123 each bind S-adenosyl-L-methionine; these read RD and ER.

Belongs to the methyltransferase superfamily. RsmJ family.

The protein resides in the cytoplasm. It carries out the reaction guanosine(1516) in 16S rRNA + S-adenosyl-L-methionine = N(2)-methylguanosine(1516) in 16S rRNA + S-adenosyl-L-homocysteine + H(+). Its function is as follows. Specifically methylates the guanosine in position 1516 of 16S rRNA. The polypeptide is Ribosomal RNA small subunit methyltransferase J (Rhodopseudomonas palustris (strain BisB5)).